A 392-amino-acid polypeptide reads, in one-letter code: 2-oxoisovalerate dehydrogenase subunit beta, mitochondrial (392 aa).

The transit peptide at 1 to 50 (MAAVAAFAGWLLRLRAAGADGPWRRLCGAGLSRGFLQSASAYGAAAQRRQ) directs the protein to the mitochondrion. Position 152 (Y152) interacts with thiamine diphosphate. K(+) contacts are provided by G178, L180, T181, C228, and D231. K232 is modified (N6-acetyllysine). N233 contacts K(+). K241 is subject to N6-acetyllysine.

In terms of assembly, heterotetramer of 2 alpha/BCKDHA and 2 beta chains/BCKDHB that forms the branched-chain alpha-keto acid decarboxylase (E1) component of the BCKD complex. The branched-chain alpha-ketoacid dehydrogenase is a large complex composed of three major building blocks E1, E2 and E3. It is organized around E2, a 24-meric cubic core composed of DBT, to which are associated 6 to 12 copies of E1, and approximately 6 copies of the dehydrogenase E3, a DLD dimer. Thiamine diphosphate serves as cofactor.

The protein localises to the mitochondrion matrix. It catalyses the reaction N(6)-[(R)-lipoyl]-L-lysyl-[protein] + 3-methyl-2-oxobutanoate + H(+) = N(6)-[(R)-S(8)-2-methylpropanoyldihydrolipoyl]-L-lysyl-[protein] + CO2. Together with BCKDHA forms the heterotetrameric E1 subunit of the mitochondrial branched-chain alpha-ketoacid dehydrogenase (BCKD) complex. The BCKD complex catalyzes the multi-step oxidative decarboxylation of alpha-ketoacids derived from the branched-chain amino-acids valine, leucine and isoleucine producing CO2 and acyl-CoA which is subsequently utilized to produce energy. The E1 subunit catalyzes the first step with the decarboxylation of the alpha-ketoacid forming an enzyme-product intermediate. A reductive acylation mediated by the lipoylamide cofactor of E2 extracts the acyl group from the E1 active site for the next step of the reaction. The sequence is that of 2-oxoisovalerate dehydrogenase subunit beta, mitochondrial (BCKDHB) from Bos taurus (Bovine).